A 391-amino-acid polypeptide reads, in one-letter code: Cytochrome b (391 aa).

A run of 4 helical transmembrane segments spans residues 33–53 (FGSL…FLAM), 77–98 (WLIR…YLHI), 113–133 (WSAG…GYVL), and 178–198 (FFAF…VHLL). His83 and His97 together coordinate heme b. Heme b is bound by residues His182 and His196. A ubiquinone is bound at residue His201. A run of 4 helical transmembrane segments spans residues 226–246 (YKDL…VLFI), 288–308 (LGGV…PILH), 320–340 (LAQI…WIGG), and 347–367 (FIII…VFFP).

Belongs to the cytochrome b family. In terms of assembly, the cytochrome bc1 complex contains 3 respiratory subunits (MT-CYB, CYC1 and UQCRFS1), 2 core proteins (UQCRC1 and UQCRC2) and probably 6 low-molecular weight proteins. Heme b is required as a cofactor.

The protein localises to the mitochondrion inner membrane. Component of the ubiquinol-cytochrome c reductase complex (complex III or cytochrome b-c1 complex) that is part of the mitochondrial respiratory chain. The b-c1 complex mediates electron transfer from ubiquinol to cytochrome c. Contributes to the generation of a proton gradient across the mitochondrial membrane that is then used for ATP synthesis. This Kryptolebias marmoratus (Mangrove killifish) protein is Cytochrome b (mt-cyb).